A 242-amino-acid polypeptide reads, in one-letter code: UPF0246 protein SP_1547 (242 aa).

The protein belongs to the UPF0246 family.

The chain is UPF0246 protein SP_1547 from Streptococcus pneumoniae serotype 4 (strain ATCC BAA-334 / TIGR4).